Consider the following 383-residue polypeptide: tRNA(Met) cytidine acetate ligase (383 aa).

ATP is bound by residues 7-20, G101, N153, and 178-179; these read IAEFNPFHSGHEFL and RI.

The protein belongs to the TmcAL family.

The protein localises to the cytoplasm. The enzyme catalyses cytidine(34) in elongator tRNA(Met) + acetate + ATP = N(4)-acetylcytidine(34) in elongator tRNA(Met) + AMP + diphosphate. In terms of biological role, catalyzes the formation of N(4)-acetylcytidine (ac(4)C) at the wobble position of elongator tRNA(Met), using acetate and ATP as substrates. First activates an acetate ion to form acetyladenylate (Ac-AMP) and then transfers the acetyl group to tRNA to form ac(4)C34. The polypeptide is tRNA(Met) cytidine acetate ligase (Lactobacillus helveticus (strain DPC 4571)).